We begin with the raw amino-acid sequence, 385 residues long: GDP-D-glucose phosphorylase 1 (385 aa).

The active-site Tele-GMP-histidine intermediate is His-218.

It belongs to the GDPGP1 family.

It is found in the cytoplasm. The catalysed reaction is GDP-alpha-D-glucose + phosphate = alpha-D-glucose 1-phosphate + GDP + H(+). In terms of biological role, specific and highly efficient GDP-D-glucose phosphorylase regulating the levels of GDP-D-glucose in cells. In Bos taurus (Bovine), this protein is GDP-D-glucose phosphorylase 1 (GDPGP1).